We begin with the raw amino-acid sequence, 248 residues long: PF03932 family protein CutC (248 aa).

Belongs to the CutC family. As to quaternary structure, homodimer.

The protein localises to the cytoplasm. The sequence is that of PF03932 family protein CutC from Escherichia coli (strain SMS-3-5 / SECEC).